Consider the following 320-residue polypeptide: Transcription factor MYB80 (320 aa).

HTH myb-type domains lie at 9–65 (KENV…RPDL) and 66–116 (KHGQ…KKKL). 2 DNA-binding regions (H-T-H motif) span residues 37–61 (WRLI…TNYL) and 89–112 (WSLI…NTKL). Residues 257–283 (TAAAEEEERRKLKGEVVDQEEIGSEGG) form a disordered region. Residues 263-272 (EERRKLKGEV) are compositionally biased toward basic and acidic residues.

As to expression, expressed in the tapetum and middle layer of developing anthers. Expressed in trichomes.

The protein localises to the nucleus. Its function is as follows. Transcription factor that binds to the DNA sequence 5'-CCAACC-3'. Regulates directly PME5, UND and GLOX1. Essential for tapetum development in anthers and microsporogenesis. Regulates the timing of tapetal programmed cell death (PCD) which is critical for pollen development. May act through the activation of UND, encoding an A1 aspartic protease. Required for anther development by regulating tapetum development, callose dissolution and exine formation. Acts upstream of A6 and FAR2/MS2, two genes required for pollen exine formation. Negatively regulates trichome endoreduplication and trichome branching. This Arabidopsis thaliana (Mouse-ear cress) protein is Transcription factor MYB80.